A 377-amino-acid polypeptide reads, in one-letter code: DNA replication and repair protein RecF (377 aa).

Residue 30–37 coordinates ATP; the sequence is GPNGVGKT.

The protein belongs to the RecF family.

Its subcellular location is the cytoplasm. Functionally, the RecF protein is involved in DNA metabolism; it is required for DNA replication and normal SOS inducibility. RecF binds preferentially to single-stranded, linear DNA. It also seems to bind ATP. In Salinispora tropica (strain ATCC BAA-916 / DSM 44818 / JCM 13857 / NBRC 105044 / CNB-440), this protein is DNA replication and repair protein RecF.